The primary structure comprises 228 residues: Protein ULTRAPETALA 2 (228 aa).

The region spanning 14–121 is the SAND domain; it reads EELQEISGVH…NKALKNSNVS (108 aa).

Expressed in influorescence, pollen and siliques, with a higher expression in influorescence.

It localises to the cytoplasm. The protein localises to the nucleus. Functionally, putative transcription factor that acts as a key negative regulator of cell accumulation in shoot and floral meristems. Negatively regulates the size of the WUSCHEL (WUS)-expressing organizing center in inflorescence meristems. May act by down-regulating expression of WUS. Can compensate for mutant ULT1 protein when overexpressed. This Arabidopsis thaliana (Mouse-ear cress) protein is Protein ULTRAPETALA 2 (ULT2).